A 134-amino-acid chain; its full sequence is Small ribosomal subunit protein uS9c (134 aa).

The tract at residues Q105–R134 is disordered. Positions K115–R134 are enriched in basic residues.

Belongs to the universal ribosomal protein uS9 family.

It is found in the plastid. Its subcellular location is the chloroplast. This chain is Small ribosomal subunit protein uS9c (rps9), found in Nephroselmis olivacea (Green alga).